We begin with the raw amino-acid sequence, 288 residues long: MAVVTMKQLLDSGTHFGHQTRRWNPKMKRFIFTDRNGIYIIDLQQTLTYIDKAYEFVKETVAHGGTVLFVGTKKQAQESIAAEATRVGMPYVNQRWLGGMLTNFTTVHKRLLRLKELEAMEQTGGFEGRTKKEILMLTREMTKLDRTLGGIRDMAKVPSAVWVVDTNKEHLAVAEARKLNIPVIAILDTNCDPDLVDYPIPGNDDAIRSAALLTKVVASAVAEGVQARAGLSSDKDAKPEAGAGEPLAEWEQELLSQAAPAAEAAPAAEAQAAPAAEAPAAEAPSTEA.

The segment at 228 to 288 (RAGLSSDKDA…PAAEAPSTEA (61 aa)) is disordered. Low complexity predominate over residues 257-288 (QAAPAAEAAPAAEAQAAPAAEAPAAEAPSTEA).

It belongs to the universal ribosomal protein uS2 family.

The polypeptide is Small ribosomal subunit protein uS2 (Rhodococcus opacus (strain B4)).